A 255-amino-acid chain; its full sequence is Triosephosphate isomerase (255 aa).

9 to 11 (NWK) is a substrate binding site. H100 (electrophile) is an active-site residue. Residue E169 is the Proton acceptor of the active site. Substrate is bound by residues G175, S208, and 229–230 (GG).

This sequence belongs to the triosephosphate isomerase family. Homodimer.

The protein localises to the cytoplasm. It catalyses the reaction D-glyceraldehyde 3-phosphate = dihydroxyacetone phosphate. The protein operates within carbohydrate biosynthesis; gluconeogenesis. It participates in carbohydrate degradation; glycolysis; D-glyceraldehyde 3-phosphate from glycerone phosphate: step 1/1. Functionally, involved in the gluconeogenesis. Catalyzes stereospecifically the conversion of dihydroxyacetone phosphate (DHAP) to D-glyceraldehyde-3-phosphate (G3P). The protein is Triosephosphate isomerase of Synechococcus sp. (strain JA-3-3Ab) (Cyanobacteria bacterium Yellowstone A-Prime).